The chain runs to 643 residues: Tigger transposable element-derived protein 5 (643 aa).

The segment at Met1–Arg50 is disordered. Positions Pro20–Arg48 are enriched in pro residues. One can recognise an HTH psq-type domain in the interval Ala52–Leu103. DNA-binding regions (H-T-H motif) lie at residues Gln79 to Asp99 and Pro150 to Arg183. The region spanning Gln117 to Arg190 is the HTH CENPB-type domain. The disordered stretch occupies residues Pro197–Tyr236. Positions Asp238 to Ala358 constitute a DDE-1 domain. The tract at residues Glu366–Thr395 is disordered.

The protein belongs to the tigger transposable element derived protein family.

It localises to the nucleus. In Bos taurus (Bovine), this protein is Tigger transposable element-derived protein 5 (TIGD5).